Here is a 368-residue protein sequence, read N- to C-terminus: Phospho-N-acetylmuramoyl-pentapeptide-transferase (368 aa).

Helical transmembrane passes span 31-51, 73-93, 98-118, 134-154, 175-195, 213-233, 249-269, 271-291, 296-316, and 345-365; these read LTSM…LYGL, TMGG…WGNL, VILL…DDYM, FILS…YTGT, GPVI…IIGS, VLIS…PIVA, VFLS…AHPA, VFMG…IVIL, ILLL…ILQV, and KIVI…LSTL.

It belongs to the glycosyltransferase 4 family. MraY subfamily. The cofactor is Mg(2+).

The protein localises to the cell inner membrane. It catalyses the reaction UDP-N-acetyl-alpha-D-muramoyl-L-alanyl-gamma-D-glutamyl-meso-2,6-diaminopimeloyl-D-alanyl-D-alanine + di-trans,octa-cis-undecaprenyl phosphate = di-trans,octa-cis-undecaprenyl diphospho-N-acetyl-alpha-D-muramoyl-L-alanyl-D-glutamyl-meso-2,6-diaminopimeloyl-D-alanyl-D-alanine + UMP. Its pathway is cell wall biogenesis; peptidoglycan biosynthesis. In terms of biological role, catalyzes the initial step of the lipid cycle reactions in the biosynthesis of the cell wall peptidoglycan: transfers peptidoglycan precursor phospho-MurNAc-pentapeptide from UDP-MurNAc-pentapeptide onto the lipid carrier undecaprenyl phosphate, yielding undecaprenyl-pyrophosphoryl-MurNAc-pentapeptide, known as lipid I. This is Phospho-N-acetylmuramoyl-pentapeptide-transferase from Leptospira interrogans serogroup Icterohaemorrhagiae serovar copenhageni (strain Fiocruz L1-130).